Reading from the N-terminus, the 317-residue chain is Aspartate carbamoyltransferase catalytic subunit (317 aa).

Residues arginine 66 and threonine 67 each contribute to the carbamoyl phosphate site. Lysine 94 contacts L-aspartate. The carbamoyl phosphate site is built by arginine 116, histidine 144, and glutamine 147. Residues arginine 177 and arginine 231 each coordinate L-aspartate. 2 residues coordinate carbamoyl phosphate: glycine 272 and proline 273.

This sequence belongs to the aspartate/ornithine carbamoyltransferase superfamily. ATCase family. Heterododecamer (2C3:3R2) of six catalytic PyrB chains organized as two trimers (C3), and six regulatory PyrI chains organized as three dimers (R2).

It carries out the reaction carbamoyl phosphate + L-aspartate = N-carbamoyl-L-aspartate + phosphate + H(+). It participates in pyrimidine metabolism; UMP biosynthesis via de novo pathway; (S)-dihydroorotate from bicarbonate: step 2/3. Catalyzes the condensation of carbamoyl phosphate and aspartate to form carbamoyl aspartate and inorganic phosphate, the committed step in the de novo pyrimidine nucleotide biosynthesis pathway. In Nitrobacter winogradskyi (strain ATCC 25391 / DSM 10237 / CIP 104748 / NCIMB 11846 / Nb-255), this protein is Aspartate carbamoyltransferase catalytic subunit.